Reading from the N-terminus, the 394-residue chain is Putative 8-amino-7-oxononanoate synthase (394 aa).

Residue R23 coordinates substrate. 110 to 111 (GY) is a binding site for pyridoxal 5'-phosphate. H135 provides a ligand contact to substrate. Pyridoxal 5'-phosphate-binding positions include S182, 207–210 (DEAH), and 238–241 (TFSK). K241 carries the post-translational modification N6-(pyridoxal phosphate)lysine. T355 is a binding site for substrate.

This sequence belongs to the class-II pyridoxal-phosphate-dependent aminotransferase family. BioF subfamily. Homodimer. Pyridoxal 5'-phosphate is required as a cofactor.

The catalysed reaction is 6-carboxyhexanoyl-[ACP] + L-alanine + H(+) = (8S)-8-amino-7-oxononanoate + holo-[ACP] + CO2. It participates in cofactor biosynthesis; biotin biosynthesis. In terms of biological role, catalyzes the decarboxylative condensation of pimeloyl-[acyl-carrier protein] and L-alanine to produce 8-amino-7-oxononanoate (AON), [acyl-carrier protein], and carbon dioxide. The protein is Putative 8-amino-7-oxononanoate synthase (bioF) of Bacillus cereus (strain Q1).